A 999-amino-acid chain; its full sequence is Tyrosine-protein kinase Mer (999 aa).

The signal sequence occupies residues 1–20 (MGPAPLPLLLGLFLPALWRR). The Extracellular segment spans residues 21–505 (AITEAREEAK…PGNADPVLII (485 aa)). Ig-like C2-type domains lie at 81–186 (PQVT…EIVS) and 197–273 (PHFT…LTVS). 14 N-linked (GlcNAc...) asparagine glycosylation sites follow: Asn-114, Asn-170, Asn-207, Asn-215, Asn-234, Asn-294, Asn-316, Asn-329, Asn-336, Asn-354, Asn-389, Asn-395, Asn-442, and Asn-454. An intrachain disulfide couples Cys-115 to Cys-175. Cys-218 and Cys-262 are joined by a disulfide. Fibronectin type-III domains lie at 286–381 (PPTE…TTEG) and 386–484 (APLN…PAHG). A helical membrane pass occupies residues 506 to 526 (FGCFCGFILIGLILYISLAIR). At 527-999 (KRVQETKFGN…DSSEGSEVLM (473 aa)) the chain is on the cytoplasmic side. Ser-543 is subject to Phosphoserine. The Protein kinase domain occupies 587-858 (LILGKILGEG…VLRLQLEKLL (272 aa)). ATP-binding positions include 593–601 (LGEGEFGSV) and Lys-615. Asp-723 (proton acceptor) is an active-site residue. 4 positions are modified to phosphotyrosine; by autocatalysis: Tyr-749, Tyr-753, Tyr-754, and Tyr-872. Ser-935 carries the phosphoserine modification.

Belongs to the protein kinase superfamily. Tyr protein kinase family. AXL/UFO subfamily. Interacts (upon activation) with TNK2; stimulates TNK2 autophosphorylation. Interacts (via N-terminus) with extracellular ligands LGALS3, TUB, TULP1 and GAS6. Interacts with VAV1 in a phosphotyrosine-independent manner. Interacts with TIMD4; this interaction enhances TIMD4-mediated efferocytosis. Post-translationally, autophosphorylated on Tyr-749, Tyr-753 and Tyr-754 in the activation loop allowing full activity. Autophosphorylated on Tyr-872 leading to recruitment of downstream partners of the signaling cascade such as PLCG2. In terms of tissue distribution, not expressed in normal B- and T-lymphocytes but is expressed in numerous neoplastic B- and T-cell lines. Highly expressed in testis, ovary, prostate, lung, and kidney, with lower expression in spleen, small intestine, colon, and liver.

The protein resides in the cell membrane. It carries out the reaction L-tyrosyl-[protein] + ATP = O-phospho-L-tyrosyl-[protein] + ADP + H(+). Its function is as follows. Receptor tyrosine kinase that transduces signals from the extracellular matrix into the cytoplasm by binding to several ligands including LGALS3, TUB, TULP1 or GAS6. Regulates many physiological processes including cell survival, migration, differentiation, and phagocytosis of apoptotic cells (efferocytosis). Ligand binding at the cell surface induces autophosphorylation of MERTK on its intracellular domain that provides docking sites for downstream signaling molecules. Following activation by ligand, interacts with GRB2 or PLCG2 and induces phosphorylation of MAPK1, MAPK2, FAK/PTK2 or RAC1. MERTK signaling plays a role in various processes such as macrophage clearance of apoptotic cells, platelet aggregation, cytoskeleton reorganization and engulfment. Functions in the retinal pigment epithelium (RPE) as a regulator of rod outer segments fragments phagocytosis. Also plays an important role in inhibition of Toll-like receptors (TLRs)-mediated innate immune response by activating STAT1, which selectively induces production of suppressors of cytokine signaling SOCS1 and SOCS3. The sequence is that of Tyrosine-protein kinase Mer (MERTK) from Homo sapiens (Human).